Consider the following 160-residue polypeptide: Phosphopantetheine adenylyltransferase (160 aa).

Ser-10 contacts substrate. ATP contacts are provided by residues 10–11 (SF) and His-18. Substrate contacts are provided by Lys-42, Leu-74, and Arg-88. Residues 89–91 (GLR), Glu-99, and 124–130 (YSFLSSS) contribute to the ATP site.

The protein belongs to the bacterial CoaD family. In terms of assembly, homohexamer. Mg(2+) is required as a cofactor.

Its subcellular location is the cytoplasm. The enzyme catalyses (R)-4'-phosphopantetheine + ATP + H(+) = 3'-dephospho-CoA + diphosphate. It participates in cofactor biosynthesis; coenzyme A biosynthesis; CoA from (R)-pantothenate: step 4/5. Its function is as follows. Reversibly transfers an adenylyl group from ATP to 4'-phosphopantetheine, yielding dephospho-CoA (dPCoA) and pyrophosphate. The protein is Phosphopantetheine adenylyltransferase of Bacillus velezensis (strain DSM 23117 / BGSC 10A6 / LMG 26770 / FZB42) (Bacillus amyloliquefaciens subsp. plantarum).